The following is a 305-amino-acid chain: D-alanine--D-alanine ligase (305 aa).

The ATP-grasp domain occupies 105–300 (KMIWQAAGIN…FDELVVQILE (196 aa)). 131–186 (ADRLGLPLIIKPAREGSTLGLNKVDNEQDFRSAYQAAAEYDSLVLAEQFIQGIELT) is a binding site for ATP. Residues aspartate 254, glutamate 267, and asparagine 269 each coordinate Mg(2+).

It belongs to the D-alanine--D-alanine ligase family. Requires Mg(2+) as cofactor. The cofactor is Mn(2+).

The protein resides in the cytoplasm. The enzyme catalyses 2 D-alanine + ATP = D-alanyl-D-alanine + ADP + phosphate + H(+). Its pathway is cell wall biogenesis; peptidoglycan biosynthesis. Its function is as follows. Cell wall formation. In Nitrosomonas europaea (strain ATCC 19718 / CIP 103999 / KCTC 2705 / NBRC 14298), this protein is D-alanine--D-alanine ligase.